We begin with the raw amino-acid sequence, 823 residues long: MSDVEKVDGECSASGKRERLTLKLGDKLKVPPSLARGTSTGKSFTTVEVRSKKRRPGEYISHDDKRRSGLNKAVSGLTAQEQLFRINAINMADSISAKEKELAAARKAKEEEELAAAAAVVEEAVEEVSVEGDVPPVEAVEAAVPDVEEVVAPVATPSHSNKSGHDDRGGKKYAHGATGRHKEKEGVSIKKVASSRGASKHIKLDIENALSGLEDKRVTRFSSSTHKRRSSNVKSGRRISREVVISDKMTVRDLALAMAEKAQDVLRMLSHVGVEARMDTGLDSEVACEIAVEFGHRPRVVSIVKMEQELSDVCGDDFVSEPRPPVVTVMGHVDHGKTSLLDVLRKSNVAEKEFRGITQHIGAYQIDVDGKKITFLDTPGHEAFADMRARGANVTDIVVLVVAADDGIMPQTVESINHVKAAGVAMVVAVNKIDKSDADVGRITNELLQYGVIAEELGGDVMIVPVSAKTGENIDKLQSAILLLAEMLELSAPRECRAQGVVIEAKIDRGCGVVATVIVQKGTLKKGDIIVAGDSSYGKVRSMFDDADRVVTSALPAMPVRVLGLNAIPKAGDTLIVMPSEKQARDLLWHRSEINSAREENRAVPSFSGAIMASMDSKVEEINLILKADVAGSMEAVSCAVEQLVHEEVKFNVLHKEMGDVTKSDVLLAEVSSAVILAFNVRVDAKARDLLRLKKVDVRHYQVIYDLVDDVRNMVSGKLKPIVQEMQVGLLTVRQMFSSGKSGTVLGCYVTEGAVTRGATVCVCRGETVIGEGTVKALRRFKEDVKEVNRGLECGLLVDGVKGVLAGDVIKVLEIVERMRGVE.

2 disordered regions span residues 30 to 66 (VPPSLARGTSTGKSFTTVEVRSKKRRPGEYISHDDKR) and 156 to 192 (TPSHSNKSGHDDRGGKKYAHGATGRHKEKEGVSIKKV). Over residues 36-48 (RGTSTGKSFTTVE) the composition is skewed to polar residues. The segment covering 56–66 (PGEYISHDDKR) has biased composition (basic and acidic residues). A tr-type G domain is found at 322-491 (PRPPVVTVMG…LLLAEMLELS (170 aa)). The segment at 331–338 (GHVDHGKT) is G1. GTP is bound at residue 331 to 338 (GHVDHGKT). Residues 356–360 (GITQH) form a G2 region. The G3 stretch occupies residues 377–380 (DTPG). GTP-binding positions include 377–381 (DTPGH) and 431–434 (NKID). The tract at residues 431–434 (NKID) is G4. Residues 467–469 (SAK) form a G5 region.

Belongs to the TRAFAC class translation factor GTPase superfamily. Classic translation factor GTPase family. IF-2 subfamily.

It is found in the cytoplasm. Functionally, one of the essential components for the initiation of protein synthesis. Protects formylmethionyl-tRNA from spontaneous hydrolysis and promotes its binding to the 30S ribosomal subunits. Also involved in the hydrolysis of GTP during the formation of the 70S ribosomal complex. The chain is Translation initiation factor IF-2 from Anaplasma phagocytophilum (strain HZ).